The primary structure comprises 887 residues: Tiger protein O1 (887 aa).

An N-terminal signal peptide occupies residues 1 to 21 (MEKKLLIIVIVFLFSTIQVFC). The Extracellular segment spans residues 22-845 (RIDDKTFVIS…SLSKKSIILL (824 aa)). N-linked (GlcNAc...) asparagine glycans are attached at residues Asn-32, Asn-70, Asn-186, Asn-207, Asn-219, Asn-259, Asn-297, Asn-314, Asn-325, Asn-338, Asn-354, Asn-393, Asn-431, Asn-588, Asn-629, Asn-652, Asn-687, Asn-710, Asn-720, Asn-730, Asn-775, Asn-788, Asn-811, and Asn-816. One can recognise an IPT/TIG 1 domain in the interval 277–365 (NSVPYSKGGL…TNENKLLFNY (89 aa)). One can recognise an IPT/TIG 2 domain in the interval 710–767 (NTSSINVNGGNLTIYGKNFYNVSNIKVEVDNQLKCNKIEFINLNSLTCFLPPFIETLF). The segment at 811–835 (NDTSENSTNDILNHEKNNNNQKDGS) is disordered. The helical transmembrane segment at 846 to 866 (SILLPSFIILIVSLAIVILVI) threads the bilayer. The Cytoplasmic segment spans residues 867–887 (KRNKTKHSKNMSSKEKELMKQ).

It localises to the membrane. This Dictyostelium discoideum (Social amoeba) protein is Tiger protein O1 (tgrO1).